The sequence spans 228 residues: Hematopoietically-expressed homeobox protein hhex (228 aa).

The homeobox DNA-binding region spans 117–176 (RKGGQVRFSNDQTIELEKKFETQKYLSPPERKRLAKMLQLSERQVKTWFQNRRAKWRRLK). Positions 175-228 (LKQENPPSTGKREAEDSDTRRLSDAAARARELESGASTDSEELLDIEDEHQFTL) are disordered. The span at 184–207 (GKREAEDSDTRRLSDAAARARELE) shows a compositional bias: basic and acidic residues. Positions 213–222 (DSEELLDIED) are enriched in acidic residues.

As to expression, expressed in embryonic endothelial and blood lineages. From late-blastula stage, expression is restricted to the dorsal marginal region of the extraembryonic yolk syncytial layer (YSL). By the onset of gastrulation, expressed in the entire dorsal half of the YSL. Post-gastrulation, expression appears in both anterior and posterior lateral plate mesoderm by the 3-somite stage. Posteriorly, expression is in the intermediate cell mass (ICM), which contains both endothelial and blood precursors. Subsequently expressed in the developing endothelial cells including the endocardium until the onset of circulation (24 hpf) and disappears completely by 30 hpf, at which point expression is seen in the thyroid and liver primordia. Also expressed in the developing biliary tree and pancreas.

It localises to the nucleus. Functionally, recognizes the DNA sequence 5'-ATTAA-3'. Transcriptional repressor. Regulates the differentiation of both endothelial and blood cells. Plays a role in embryonic dorsoventral patterning by regulating bmp expression. May establish anterior identity. Functions in the embryo to regulate liver development. Functions extraembryonically to generate organ chirality. The sequence is that of Hematopoietically-expressed homeobox protein hhex from Danio rerio (Zebrafish).